A 573-amino-acid chain; its full sequence is Developmental and secondary metabolism regulator veA (573 aa).

Residues 1–11 show a composition bias toward pro residues; sequence MATLAAPPPPL. 2 disordered regions span residues 1–24 and 39–63; these read MATL…SRIT and QPKR…DPPP. Positions 27–230 constitute a Velvet domain; sequence GKKITYKLNI…AEQGCRVRIR (204 aa). The Nuclear localization signal signature appears at 41-46; the sequence is KRARAC. Residues T167 and T170 each carry the phosphothreonine modification. Position 183 is a phosphoserine (S183). 3 disordered regions span residues 236–295, 307–367, and 384–573; these read RRRG…RRPS, YQRP…SYQS, and SHIP…ATMR. A compositionally biased stretch (basic and acidic residues) spans 241 to 260; the sequence is KRTEDYDYDNERGYNNRRPD. A Phosphotyrosine modification is found at Y254. Composition is skewed to pro residues over residues 318–339 and 347–361; these read SSTP…PSTP and PAPP…PPLH. Low complexity predominate over residues 387 to 412; the sequence is PQQTTTPTHPYSPRSSISHSRNQSIS. Residues 452–493 show a composition bias toward polar residues; it reads PSVNSRSKTPSNMITSLPPIQSLSELPSTTSQPSSAIGSSPA. A PEST region spans residues 459-498; the sequence is KTPSNMITSLPPIQSLSELPSTTSQPSSAIGSSPANEPGP. The span at 510-522 shows a compositional bias: basic and acidic residues; the sequence is RTYEESFGHDDRP.

Belongs to the velvet family. VeA subfamily. In terms of assembly, component of the heterotrimeric velvet complex composed of laeA, veA and velB; VeA acting as a bridging protein between laeA and velB. Interacts with the light-sensing phytochrome fphA. Interacts with llmF. Phosphorylated at Thr-167, Thr-170, Ser-183 and Tyr-254. Thr-167 should be phosphorylated and T170 and S183 should be dephosphorylated to achieve light induction of conidiation. Phosphorylation of Ser-183 and Tyr-254 influence sterigmatocystin production in a light-independent manner. Phosphorylation of Thr-167 and Thr-170 modulates expression of veA.

It localises to the nucleus. The protein localises to the cytoplasm. Its function is as follows. Component of the velvet transcription factor complex that controls sexual/asexual developmental ratio in response to light, promoting sexual development in the darkness while stimulating asexual sporulation under illumination. The velvet complex acts as a global regulator for secondary metabolite gene expression. Controls the expression of the sterigmatocystin and penicillin gene clusters. Represses the cryptic ors gene cluster producing orsellinic acid and its F9775 derivatives in a laeA-independent manner. Required for full induction of faoA gene expression by fructosyl amines. Positively regulates the expression of the early sexual development gene esdC. Controls the expression of mannoprotein mnpA. This Emericella nidulans (strain FGSC A4 / ATCC 38163 / CBS 112.46 / NRRL 194 / M139) (Aspergillus nidulans) protein is Developmental and secondary metabolism regulator veA.